The chain runs to 219 residues: uncharacterized protein (219 aa).

One can recognise an ACT domain in the interval 4 to 79; sequence GLRIIAENKI…YIIEIEEEES (76 aa).

This is an uncharacterized protein from Archaeoglobus fulgidus (strain ATCC 49558 / DSM 4304 / JCM 9628 / NBRC 100126 / VC-16).